A 487-amino-acid polypeptide reads, in one-letter code: GPI mannosyltransferase 1 (487 aa).

3 consecutive transmembrane segments (helical) span residues 26–46 (PLPL…YGLW), 87–107 (ILAW…GPWA), and 121–141 (VLFA…LVMG). The segment at 147–175 (SAAKGKEKDTEKTKEGGKKGPSVTASTGM) is disordered. A compositionally biased stretch (basic and acidic residues) spans 150 to 164 (KGKEKDTEKTKEGGK). Helical transmembrane passes span 205–225 (LLGV…ITLA), 227–247 (LLLG…PAIV), 289–309 (LLLA…MYRL), 359–379 (IESL…PLTL), 393–413 (FAFV…YLVL), 429–449 (MGLV…QQAY), and 462–482 (GLWM…GVIV).

Belongs to the PIGM family.

The protein localises to the endoplasmic reticulum membrane. It participates in glycolipid biosynthesis; glycosylphosphatidylinositol-anchor biosynthesis. Mannosyltransferase involved in glycosylphosphatidylinositol-anchor biosynthesis. Transfers the first alpha-1,4-mannose to GlcN-acyl-PI during GPI precursor assembly. Required for cell wall integrity. The polypeptide is GPI mannosyltransferase 1 (gim-1) (Neurospora crassa (strain ATCC 24698 / 74-OR23-1A / CBS 708.71 / DSM 1257 / FGSC 987)).